A 32-amino-acid chain; its full sequence is Photosystem I reaction center subunit XII (32 aa).

A helical membrane pass occupies residues 9–31; that stretch reads VYVALVSALITSFLAVRLGLALY.

The protein belongs to the PsaM family.

The protein localises to the plastid. It is found in the chloroplast thylakoid membrane. This is Photosystem I reaction center subunit XII from Chaetosphaeridium globosum (Charophycean green alga).